The sequence spans 459 residues: MFS-type transporter SLC18B1 (459 aa).

Met-1 is subject to N-acetylmethionine. Residues 1-10 (MDEAGSPAPA) are compositionally biased toward low complexity. Residues 1–27 (MDEAGSPAPAGTGGGDDPGGSTRETSR) form a disordered region. Topologically, residues 1-33 (MDEAGSPAPAGTGGGDDPGGSTRETSRRLSREQ) are cytoplasmic. Ser-21 carries the post-translational modification Phosphoserine. Residues 34-54 (IFVLVSAASMNLGCMMTYSIL) traverse the membrane as a helical segment. The Extracellular segment spans residues 55–70 (GPFFPKEAEKKGASNT). The chain crosses the membrane as a helical span at residues 71 to 91 (MIGMIFGCYALFELLASLVFG). Topologically, residues 92–100 (KYLVHIGAK) are cytoplasmic. A helical transmembrane segment spans residues 101–121 (FMFIAGMFVSGGVTILFGVLD). At 122-127 (QLPEGP) the chain is on the extracellular side. The chain crosses the membrane as a helical span at residues 128-148 (IFIAMCFLVRIVDAIGFGAAI). At 149-167 (TASSSILAKAFPNNVATVM) the chain is on the cytoplasmic side. A helical membrane pass occupies residues 168-188 (GSLEVFSGLGLVAGPPLGGLL). At 189–195 (YQSFGYE) the chain is on the extracellular side. A helical membrane pass occupies residues 196-216 (VPFIFLGCIVLLMIPLNLYIL). At 217–235 (PSYAQESDPGKQSFWKLVT) the chain is on the cytoplasmic side. Residues 236 to 256 (LPKMGLLAFVIISLSSCFGFL) traverse the membrane as a helical segment. The Extracellular segment spans residues 257–274 (DPTLSLFVMEKFSLSTGY). A helical membrane pass occupies residues 275–295 (VGLVFLGLSLSYAISSPLFGL). Residues 296–306 (LSDKMPTLRKW) lie on the Cytoplasmic side of the membrane. Residues 307–327 (LLVFGNLITAGCYMLLGPVPL) traverse the membrane as a helical segment. Over 328–333 (LHIKSQ) the chain is Extracellular. A helical membrane pass occupies residues 334-354 (LWLLVLVLVVNGISAGMSIIP). Topologically, residues 355-379 (TFPEMLSCAYANGFEDSISTLGLVS) are cytoplasmic. A helical membrane pass occupies residues 380–400 (GLFGAMWSVGAFMGPILGGFL). Residues 401 to 409 (CEKIGFEWA) lie on the Extracellular side of the membrane. A helical membrane pass occupies residues 410–430 (AAMQGLWTLLSGVSMALFYLW). The Cytoplasmic segment spans residues 431–459 (EDSTARRRSKAQNSLGTEEERAALLPNDT). Residues 440–459 (KAQNSLGTEEERAALLPNDT) are disordered.

It belongs to the major facilitator superfamily. Widely expressed, with highest expression in the lung, pancreas and kidney. High expression in the CNS, particularly in the hypothalamus, the thalamus and the cerebellum. In the forebrain, abundantly expressed in the telencephalon, especially in the cerebral cortex layers, except layer 1, as well as in the induseum griseum, the piriform area, the taenia tecta, dorsal part and in the entorhinal area, lateral part. Lower levels in the bed anterior olfactory nucleus, posteroventral part and in layer two of the olfactory tubercle. In the amygdala, high levels observed in the intercalated nucleus and the medial nucleus. In the diencephalon, expressed in the nuclei in both the hypothalamus and thalamus. Among the hypothalamic areas, strongest expression in the arcuate nucleus and in the ventromedial nucleus, as well as in the suprachiasmatic nucleus, anterior nucleus, especially in its central part, and in the magnocellular division of the paraventricular nucleus. In the thalamus, highest levels in the medial habenula. Expression also observed in the paraventricular thalamic nucleus, parataenial nucleus, central medial nucleus, intermediodorsal nucleus and lateral dorsal nucleus. In the hindbrain, detected in the cerebellum and in the pons. In the midbrain and the medulla, expression levels were modest. In the midbrain, highest expression in the periaqueductal gray and all subdivisions of the interpeduncular nucleus, except for the caudal part. In the pons, the strongest labeling was seen in the nucleus incertus and in the tegmental nucleus. Expressed in bone marrow-derived mast cells (at protein level).

The protein resides in the cytoplasmic vesicle. It localises to the secretory vesicle membrane. It is found in the secretory vesicle. The protein localises to the synaptic vesicle membrane. The catalysed reaction is spermine(in) + n H(+)(out) = spermine(out) + n H(+)(in). It catalyses the reaction spermidine(in) + n H(+)(out) = spermidine(out) + n H(+)(in). The enzyme catalyses serotonin(in) + n H(+)(out) = serotonin(out) + n H(+)(in). Proton-coupled polyamine antiporter involved in the translocation of polyamines from cytosol into secretory vesicles prior to their release via exocytosis. Uses the electrochemical proton gradient generated by a V-type proton-pumping ATPase to couple the efflux of protons with the uptake of a polyamine molecule. Facilitates vesicular storage of spermine and spermidine in astrocytes with an impact on glutamatergic neuronal transmission and memory formation. Upon antigen stimulation, regulates polyamine accumulation and release in mast cell secretory granules, which in turn potentiates mast cell degranulation and histamine secretion. This chain is MFS-type transporter SLC18B1, found in Mus musculus (Mouse).